The following is a 600-amino-acid chain: Elongation factor 4 (600 aa).

In terms of domain architecture, tr-type G spans 5–187 (KYIRNFSIIA…AIVNKLPPPK (183 aa)). Residues 17-22 (DHGKST) and 134-137 (NKLD) contribute to the GTP site.

Belongs to the TRAFAC class translation factor GTPase superfamily. Classic translation factor GTPase family. LepA subfamily.

The protein localises to the cell inner membrane. The enzyme catalyses GTP + H2O = GDP + phosphate + H(+). Required for accurate and efficient protein synthesis under certain stress conditions. May act as a fidelity factor of the translation reaction, by catalyzing a one-codon backward translocation of tRNAs on improperly translocated ribosomes. Back-translocation proceeds from a post-translocation (POST) complex to a pre-translocation (PRE) complex, thus giving elongation factor G a second chance to translocate the tRNAs correctly. Binds to ribosomes in a GTP-dependent manner. The chain is Elongation factor 4 from Rickettsia africae (strain ESF-5).